A 233-amino-acid polypeptide reads, in one-letter code: tRNA (guanine-N(1)-)-methyltransferase (233 aa).

Residues Gly113 and 133-138 (VGDYVL) contribute to the S-adenosyl-L-methionine site.

It belongs to the RNA methyltransferase TrmD family. As to quaternary structure, homodimer.

Its subcellular location is the cytoplasm. The catalysed reaction is guanosine(37) in tRNA + S-adenosyl-L-methionine = N(1)-methylguanosine(37) in tRNA + S-adenosyl-L-homocysteine + H(+). Its function is as follows. Specifically methylates guanosine-37 in various tRNAs. The chain is tRNA (guanine-N(1)-)-methyltransferase from Rhizobium etli (strain ATCC 51251 / DSM 11541 / JCM 21823 / NBRC 15573 / CFN 42).